The chain runs to 164 residues: ATP synthase subunit b (164 aa).

Residues 5-25 (IGELIGNFILVAGSFLLLIVL) traverse the membrane as a helical segment.

This sequence belongs to the ATPase B chain family. As to quaternary structure, F-type ATPases have 2 components, F(1) - the catalytic core - and F(0) - the membrane proton channel. F(1) has five subunits: alpha(3), beta(3), gamma(1), delta(1), epsilon(1). F(0) has three main subunits: a(1), b(2) and c(10-14). The alpha and beta chains form an alternating ring which encloses part of the gamma chain. F(1) is attached to F(0) by a central stalk formed by the gamma and epsilon chains, while a peripheral stalk is formed by the delta and b chains.

Its subcellular location is the cell membrane. F(1)F(0) ATP synthase produces ATP from ADP in the presence of a proton or sodium gradient. F-type ATPases consist of two structural domains, F(1) containing the extramembraneous catalytic core and F(0) containing the membrane proton channel, linked together by a central stalk and a peripheral stalk. During catalysis, ATP synthesis in the catalytic domain of F(1) is coupled via a rotary mechanism of the central stalk subunits to proton translocation. Its function is as follows. Component of the F(0) channel, it forms part of the peripheral stalk, linking F(1) to F(0). The polypeptide is ATP synthase subunit b (Streptococcus gordonii (strain Challis / ATCC 35105 / BCRC 15272 / CH1 / DL1 / V288)).